A 224-amino-acid chain; its full sequence is Uracil-DNA glycosylase 2 (224 aa).

Aspartate 64 functions as the Proton acceptor in the catalytic mechanism.

The protein belongs to the uracil-DNA glycosylase (UDG) superfamily. UNG family.

The protein resides in the cytoplasm. It catalyses the reaction Hydrolyzes single-stranded DNA or mismatched double-stranded DNA and polynucleotides, releasing free uracil.. Excises uracil residues from the DNA which can arise as a result of misincorporation of dUMP residues by DNA polymerase or due to deamination of cytosine. In Listeria monocytogenes serotype 4b (strain F2365), this protein is Uracil-DNA glycosylase 2.